The primary structure comprises 87 residues: Small ribosomal subunit protein uS19 (87 aa).

It belongs to the universal ribosomal protein uS19 family.

In terms of biological role, protein S19 forms a complex with S13 that binds strongly to the 16S ribosomal RNA. This Mesoplasma florum (strain ATCC 33453 / NBRC 100688 / NCTC 11704 / L1) (Acholeplasma florum) protein is Small ribosomal subunit protein uS19.